A 763-amino-acid chain; its full sequence is Phospholipid phosphatase-related protein type 4 (763 aa).

The interval 33–54 (VHTSPGGGRRPGQAAGMSAKER) is disordered. Ser-36 carries the post-translational modification Phosphoserine. 3 helical membrane passes run 67 to 87 (LPCFYFVELPILASSVVSLYF), 119 to 139 (AIPFLMLLSLAFAGPAITIMV), and 178 to 198 (FVGVHVFGLCSTALITDIIQL). N-linked (GlcNAc...) asparagine glycosylation is found at Asn-214 and Asn-219. Residues 247-267 (SFPSQHATLAAFAAVYVSMYF) traverse the membrane as a helical segment. Residue Asn-268 is glycosylated (N-linked (GlcNAc...) asparagine). 2 helical membrane passes run 276–296 (KLLKPLLVFTFIICGIICGLT) and 308–328 (VYCGFLIGGGIALYLGLYAVG). Phosphoserine is present on Ser-346. N-linked (GlcNAc...) asparagine glycosylation occurs at Asn-362. Ser-385 is modified (phosphoserine). Asn-432 carries N-linked (GlcNAc...) asparagine glycosylation. Phosphoserine is present on Ser-438. Asn-455 is a glycosylation site (N-linked (GlcNAc...) asparagine). A disordered region spans residues 458–529 (RKLSLQVIEP…PRVSIQSRPG (72 aa)). Ser-461 and Ser-472 each carry phosphoserine. N-linked (GlcNAc...) asparagine glycans are attached at residues Asn-513, Asn-543, and Asn-568. Ser-606 bears the Phosphoserine mark. The span at 669–694 (DSESCESLKDSFGSGDRKRSNIDSNE) shows a compositional bias: basic and acidic residues. Disordered regions lie at residues 669–698 (DSESCESLKDSFGSGDRKRSNIDSNEHHHH) and 739–763 (ERSNSPENTRNIFYKGTSPTRAYKD). The segment covering 740-749 (RSNSPENTRN) has biased composition (polar residues).

Belongs to the PA-phosphatase related phosphoesterase family. In terms of processing, O-glycosylated. Probably at Ser-346. In terms of tissue distribution, expressed by glutamatergic neurons (at protein level).

Its subcellular location is the postsynaptic density membrane. Its function is as follows. Postsynaptic density membrane protein that indirectly regulates glutamatergic synaptic transmission through lysophosphatidic acid (LPA)-mediated signaling pathways. Binds lysophosphatidic acid (LPA) and mediates its internalization into cells. Could act as receptor or a transporter of this lipid at the post-synaptic membrane. Modulates lysophosphatidic acid (LPA) activity in neuron axonal outgrowth during development by attenuating phospholipid-induced axon collapse. The protein is Phospholipid phosphatase-related protein type 4 of Homo sapiens (Human).